A 226-amino-acid chain; its full sequence is Gap junction beta-2 protein (226 aa).

Residues 2–13 (DWSALQTILGGV) lie within the membrane without spanning it. At 14–20 (NKHSTSI) the chain is on the cytoplasmic side. Residues 21 to 40 (GKIWLTVLFIFRIMILVVAA) form a helical membrane-spanning segment. The Extracellular portion of the chain corresponds to 41-73 (KEVWGDEQADFVCNTLQPGCKNVCYDHYFPISH). Residues Glu-42, Gly-45, and Glu-47 each contribute to the Ca(2+) site. 3 disulfide bridges follow: Cys-53/Cys-180, Cys-60/Cys-174, and Cys-64/Cys-169. Residues 74–94 (IRLWALQLIFVSTPALLVAMH) form a helical membrane-spanning segment. Residues 95 to 135 (VAYYRHEKKRKFIRGEIKTEFKDIEEIKNQKVRIEGSLWWT) lie on the Cytoplasmic side of the membrane. A helical transmembrane segment spans residues 136 to 156 (YTGSIFFRVIFEAAFMYVFYV). Residues 157–189 (MYDGFAMQRLVKCNAWPCPNTVDCFVSRPTEKT) are Extracellular-facing. A helical membrane pass occupies residues 190-210 (VFTVFMIAVSGICILLNVTEL). The Cytoplasmic segment spans residues 211–226 (CYLLIRFCSGKSKKPV).

Belongs to the connexin family. Beta-type (group I) subfamily. In terms of assembly, a hemichannel or connexon is composed of a hexamer of connexins. A functional gap junction is formed by the apposition of two hemichannels. Forms heteromeric channels with GJB4. Interacts with CNST.

It is found in the cell membrane. It localises to the cell junction. The protein localises to the gap junction. Its function is as follows. Structural component of gap junctions. Gap junctions are dodecameric channels that connect the cytoplasm of adjoining cells. They are formed by the docking of two hexameric hemichannels, one from each cell membrane. Small molecules and ions diffuse from one cell to a neighboring cell via the central pore. The chain is Gap junction beta-2 protein (GJB2) from Ovis aries (Sheep).